The sequence spans 193 residues: dCTP deaminase, dUMP-forming (193 aa).

DCTP is bound by residues 107 to 112, Asp-125, 133 to 135, Gln-154, and Tyr-168; these read RSSLGR and TLE. The active-site Proton donor/acceptor is Glu-135. The disordered stretch occupies residues 169–193; sequence AESSGKYHGDERPSPSKMHLDFCRG. The span at 173–193 shows a compositional bias: basic and acidic residues; that stretch reads GKYHGDERPSPSKMHLDFCRG.

It belongs to the dCTP deaminase family. Homotrimer.

It catalyses the reaction dCTP + 2 H2O = dUMP + NH4(+) + diphosphate. The protein operates within pyrimidine metabolism; dUMP biosynthesis; dUMP from dCTP: step 1/1. Its function is as follows. Bifunctional enzyme that catalyzes both the deamination of dCTP to dUTP and the hydrolysis of dUTP to dUMP without releasing the toxic dUTP intermediate. The polypeptide is dCTP deaminase, dUMP-forming (Methanopyrus kandleri (strain AV19 / DSM 6324 / JCM 9639 / NBRC 100938)).